The primary structure comprises 110 residues: Nucleoid-associated protein NFA_2940 (110 aa).

It belongs to the YbaB/EbfC family. As to quaternary structure, homodimer.

Its subcellular location is the cytoplasm. The protein localises to the nucleoid. In terms of biological role, binds to DNA and alters its conformation. May be involved in regulation of gene expression, nucleoid organization and DNA protection. This is Nucleoid-associated protein NFA_2940 from Nocardia farcinica (strain IFM 10152).